The following is a 216-amino-acid chain: LHFPL tetraspan subfamily member 3 protein (216 aa).

4 consecutive transmembrane segments (helical) span residues 22-42 (IGVL…VCFV), 96-116 (FFIG…ALFF), 126-146 (ICGW…MIYP), and 177-197 (ILAI…FVLG).

This sequence belongs to the LHFP family.

It localises to the membrane. This chain is LHFPL tetraspan subfamily member 3 protein, found in Danio rerio (Zebrafish).